Reading from the N-terminus, the 234-residue chain is Lipoprotein-releasing system ATP-binding protein LolD (234 aa).

The 221-residue stretch at 13 to 233 folds into the ABC transporter domain; sequence IYLHEIKRQY…SLSDGQVVEL (221 aa). 49–56 lines the ATP pocket; it reads APSGSGKS.

The protein belongs to the ABC transporter superfamily. Lipoprotein translocase (TC 3.A.1.125) family. The complex is composed of two ATP-binding proteins (LolD) and two transmembrane proteins (LolC and LolE).

It is found in the cell inner membrane. In terms of biological role, part of the ABC transporter complex LolCDE involved in the translocation of mature outer membrane-directed lipoproteins, from the inner membrane to the periplasmic chaperone, LolA. Responsible for the formation of the LolA-lipoprotein complex in an ATP-dependent manner. The polypeptide is Lipoprotein-releasing system ATP-binding protein LolD (Bradyrhizobium diazoefficiens (strain JCM 10833 / BCRC 13528 / IAM 13628 / NBRC 14792 / USDA 110)).